Consider the following 361-residue polypeptide: Peptide chain release factor 1 (361 aa).

Residue Gln-235 is modified to N5-methylglutamine.

It belongs to the prokaryotic/mitochondrial release factor family. Post-translationally, methylated by PrmC. Methylation increases the termination efficiency of RF1.

It is found in the cytoplasm. Its function is as follows. Peptide chain release factor 1 directs the termination of translation in response to the peptide chain termination codons UAG and UAA. This is Peptide chain release factor 1 from Buchnera aphidicola subsp. Acyrthosiphon pisum (strain 5A).